The primary structure comprises 432 residues: Enolase (432 aa).

Gln167 contributes to the (2R)-2-phosphoglycerate binding site. Glu209 (proton donor) is an active-site residue. Mg(2+) contacts are provided by Asp246, Glu291, and Asp318. (2R)-2-phosphoglycerate contacts are provided by Lys343, Arg372, Ser373, and Lys394. Lys343 serves as the catalytic Proton acceptor.

The protein belongs to the enolase family. Component of the RNA degradosome, a multiprotein complex involved in RNA processing and mRNA degradation. The cofactor is Mg(2+).

It is found in the cytoplasm. Its subcellular location is the secreted. The protein resides in the cell surface. It catalyses the reaction (2R)-2-phosphoglycerate = phosphoenolpyruvate + H2O. Its pathway is carbohydrate degradation; glycolysis; pyruvate from D-glyceraldehyde 3-phosphate: step 4/5. In terms of biological role, catalyzes the reversible conversion of 2-phosphoglycerate (2-PG) into phosphoenolpyruvate (PEP). It is essential for the degradation of carbohydrates via glycolysis. The chain is Enolase from Buchnera aphidicola subsp. Cinara cedri (strain Cc).